The following is a 34-amino-acid chain: Surfactant protein C (34 aa).

The S-palmitoyl cysteine moiety is linked to residue cysteine 4.

Its subcellular location is the secreted. The protein resides in the extracellular space. It localises to the surface film. Its function is as follows. Pulmonary surfactant associated proteins promote alveolar stability by lowering the surface tension at the air-liquid interface in the peripheral air spaces. The chain is Surfactant protein C (SFTPC) from Canis lupus familiaris (Dog).